Consider the following 434-residue polypeptide: Nicotinate phosphoribosyltransferase (434 aa).

H242 carries the post-translational modification Phosphohistidine; by autocatalysis.

It belongs to the NAPRTase family. Transiently phosphorylated on a His residue during the reaction cycle. Phosphorylation strongly increases the affinity for substrates and increases the rate of nicotinate D-ribonucleotide production. Dephosphorylation regenerates the low-affinity form of the enzyme, leading to product release.

It carries out the reaction nicotinate + 5-phospho-alpha-D-ribose 1-diphosphate + ATP + H2O = nicotinate beta-D-ribonucleotide + ADP + phosphate + diphosphate. The protein operates within cofactor biosynthesis; NAD(+) biosynthesis; nicotinate D-ribonucleotide from nicotinate: step 1/1. In terms of biological role, catalyzes the synthesis of beta-nicotinate D-ribonucleotide from nicotinate and 5-phospho-D-ribose 1-phosphate at the expense of ATP. This is Nicotinate phosphoribosyltransferase from Nitrobacter hamburgensis (strain DSM 10229 / NCIMB 13809 / X14).